The chain runs to 195 residues: Peptidyl-tRNA hydrolase (195 aa).

Residue Tyr-17 participates in tRNA binding. His-22 serves as the catalytic Proton acceptor. 3 residues coordinate tRNA: Phe-68, Asn-70, and Asn-116.

This sequence belongs to the PTH family. In terms of assembly, monomer.

It is found in the cytoplasm. It carries out the reaction an N-acyl-L-alpha-aminoacyl-tRNA + H2O = an N-acyl-L-amino acid + a tRNA + H(+). Its function is as follows. Hydrolyzes ribosome-free peptidyl-tRNAs (with 1 or more amino acids incorporated), which drop off the ribosome during protein synthesis, or as a result of ribosome stalling. In terms of biological role, catalyzes the release of premature peptidyl moieties from peptidyl-tRNA molecules trapped in stalled 50S ribosomal subunits, and thus maintains levels of free tRNAs and 50S ribosomes. This Erwinia tasmaniensis (strain DSM 17950 / CFBP 7177 / CIP 109463 / NCPPB 4357 / Et1/99) protein is Peptidyl-tRNA hydrolase.